A 403-amino-acid chain; its full sequence is MDHLSNLPDELLCHIMSFLTTKEAALISVLSKRWRNLIAFVPNLDIFDCDILHWEVRKEERDDIRQLFMDFVDRVLALQGNSPLKKFSLCCGGGSYSDRVDCWIQNVMVRGVSELDLSMIFDTSYHMYPQVFENKKLNFEIFLRALPALEELVMNHIYWKELDVNVHVSVSSASLKTLTIKCIVCLHTKSFDTPSLAYLSYSDYAMGDYPVAKMENLFEARISLFVPEDDISRLMNSIRNVRYLYFSRDTLEVLSLCCESMPVFKNLKSLSIKSVESRGWQAMPVLLRNCPHLETLVLEALLHHVTDKCGDACACVSREEKGRSLKSCPVKVLEIKEFQGTMKEMHMIKHFLDYLPCLKEMKISYMKKNDHTTQFRVIPQVIAEMVEHYNKLSNCNVQLVVSG.

Positions 1–47 (MDHLSNLPDELLCHIMSFLTTKEAALISVLSKRWRNLIAFVPNLDIF) constitute an F-box domain. LRR repeat units lie at residues 64–91 (IRQL…SLCC), 93–119 (GGSY…DLSM), 131–156 (VFEN…VMNH), 175–203 (LKTL…SYSD), 243–274 (YLYF…SIKS), and 275–300 (VESR…VLEA).

This is Putative F-box/LRR-repeat protein At5g38386 from Arabidopsis thaliana (Mouse-ear cress).